The sequence spans 927 residues: Solute carrier family 12 protein B0303.11 (927 aa).

Residues 1-23 lie on the Cytoplasmic side of the membrane; sequence MPSSTASSEDAPITSTAWMNWKD. A helical membrane pass occupies residues 24-44; the sequence is VFLKCVQPMLAVVLLLRFSSI. Over 45 to 53 the chain is Extracellular; sequence VDEAGFTTT. A helical transmembrane segment spans residues 54-74; sequence IILVFFTFLVSLVTGWSACTV. Residues 75 to 95 are Cytoplasmic-facing; it reads VSRKSSEVGFVKTMLAYSSTE. The helical transmembrane segment at 96 to 116 threads the bilayer; sequence FAISFSIIYLFCLLVATSTFL. Over 117-141 the chain is Extracellular; sequence TSAAEAVLHIFSTFSLELLDGATHD. A helical transmembrane segment spans residues 142 to 159; it reads LRLVSSVLSLITLALCMV. Over 160–165 the chain is Cytoplasmic; sequence RNRNAR. Residues 166–186 traverse the membrane as a helical segment; it reads FVRTFIFALTCIAIALQLSSV. The Extracellular segment spans residues 187 to 212; that stretch reads MFRYGEYQLRRVSDRNAMIPSPPNEE. The helical transmembrane segment at 213 to 233 threads the bilayer; sequence ISTIFAQLFPAAMCGLTILNI. The Cytoplasmic portion of the chain corresponds to 234–244; the sequence is GSKLQNTAPRG. Residues 245–265 traverse the membrane as a helical segment; the sequence is ALIAIAVSACFYGAAAMLDYV. Residues 266 to 284 lie on the Extracellular side of the membrane; that stretch reads EFFARTSTSNSTGSAEYNE. N-linked (GlcNAc...) asparagine glycosylation is present at Asn-275. The chain crosses the membrane as a helical span at residues 285–305; sequence FLSYIYTTVPMAIVITLACVL. Residues 306–345 lie on the Cytoplasmic side of the membrane; that stretch reads SAVSTLKYAAVILQSLGRSNQCRCILWLAKGFGERDIPIR. The helical transmembrane segment at 346-366 threads the bilayer; it reads CLLLLSTVQILVSAIGSYDIL. Cys-367 is a topological domain (extracellular). Residues 368-388 form a helical membrane-spanning segment; the sequence is IPTTVFYLFAYALFNFYVFLV. The Cytoplasmic portion of the chain corresponds to 389–394; that stretch reads KLSDPE. The chain crosses the membrane as a helical span at residues 395-415; the sequence is IPSPPTLLSLAISAACFIASL. The Extracellular portion of the chain corresponds to 416–419; that stretch reads YTNR. The helical transmembrane segment at 420–440 threads the bilayer; that stretch reads HLALFIASIFAISYCSLLYII. Over 441 to 927 the chain is Cytoplasmic; the sequence is RRERNEDGEE…SMSALRLKFP (487 aa).

It belongs to the SLC12A transporter family.

It localises to the cell membrane. The sequence is that of Solute carrier family 12 protein B0303.11 from Caenorhabditis elegans.